A 262-amino-acid polypeptide reads, in one-letter code: Thiazole synthase (262 aa).

Lys-98 serves as the catalytic Schiff-base intermediate with DXP. 1-deoxy-D-xylulose 5-phosphate contacts are provided by residues Gly-159, 186 to 187 (AG), and 208 to 209 (NT).

This sequence belongs to the ThiG family. As to quaternary structure, homotetramer. Forms heterodimers with either ThiH or ThiS.

It localises to the cytoplasm. It carries out the reaction [ThiS sulfur-carrier protein]-C-terminal-Gly-aminoethanethioate + 2-iminoacetate + 1-deoxy-D-xylulose 5-phosphate = [ThiS sulfur-carrier protein]-C-terminal Gly-Gly + 2-[(2R,5Z)-2-carboxy-4-methylthiazol-5(2H)-ylidene]ethyl phosphate + 2 H2O + H(+). It functions in the pathway cofactor biosynthesis; thiamine diphosphate biosynthesis. Functionally, catalyzes the rearrangement of 1-deoxy-D-xylulose 5-phosphate (DXP) to produce the thiazole phosphate moiety of thiamine. Sulfur is provided by the thiocarboxylate moiety of the carrier protein ThiS. In vitro, sulfur can be provided by H(2)S. The chain is Thiazole synthase from Hahella chejuensis (strain KCTC 2396).